We begin with the raw amino-acid sequence, 206 residues long: Large ribosomal subunit protein uL4 (206 aa).

The disordered stretch occupies residues Gly46–Glu95. The span at Ser59–Gly70 shows a compositional bias: basic residues.

Belongs to the universal ribosomal protein uL4 family. In terms of assembly, part of the 50S ribosomal subunit.

One of the primary rRNA binding proteins, this protein initially binds near the 5'-end of the 23S rRNA. It is important during the early stages of 50S assembly. It makes multiple contacts with different domains of the 23S rRNA in the assembled 50S subunit and ribosome. Its function is as follows. Forms part of the polypeptide exit tunnel. The chain is Large ribosomal subunit protein uL4 from Neisseria meningitidis serogroup C (strain 053442).